The chain runs to 3176 residues: Large tegument protein deneddylase (3176 aa).

Over residues 1-12 (MSNGDWGQSQRP) the composition is skewed to polar residues. The segment at 1–28 (MSNGDWGQSQRPRGTGPMRGIRTMDVNA) is disordered. Residues 1 to 268 (MSNGDWGQSQ…YEANGSGFDL (268 aa)) are deubiquitination activity. The Peptidase C76 domain occupies 41–258 (LGTASCNQAH…MLEHYGVYDF (218 aa)). Residues Cys-61, Asp-193, and His-195 contribute to the active site. The segment at 319 to 342 (PAARYSPAKTNSPPPSPASAAPAS) is disordered. Tandem repeats lie at residues 335–339 (PASAA), 340–344 (PASAA), 345–349 (PASAA), 350–354 (PASAA), and 355–359 (PASAA). Positions 335–384 (PASAAPASAAPASAAPASAAPASAAQASVAPASVAPASAAPASAAPDSAA) are 10 X 5 AA approximate repeats of P-A-S-A-A. One copy of the 6; approximate repeat lies at 360–364 (QASVA). The 7; approximate repeat unit spans residues 365-369 (PASVA). Tandem repeats lie at residues 370 to 374 (PASAA) and 375 to 379 (PASAA). Residues 376 to 386 (ASAAPDSAAPA) show a composition bias toward low complexity. Disordered regions lie at residues 376 to 683 (ASAA…GSGL), 928 to 950 (LLSG…SIYR), 1170 to 1193 (APIS…TPPL), 1435 to 1461 (LMET…RARE), 2610 to 3008 (GLVS…PGAR), and 3023 to 3043 (TYTV…KMPK). The stretch at 380–384 (PDSAA) is one 10; approximate repeat. Pro residues predominate over residues 457–488 (PRPPVPPHRPPSAARLPPPVIPIPHQSPPASP). Residues 519 to 546 (AAPSNPEIPLTTPSPSPTAAAAPTATTL) are compositionally biased toward low complexity. A compositionally biased stretch (pro residues) spans 579–636 (APSPLLPQQQPPPSAAPAPSPLLPQQQPPPSAARAPSPLPPQQQPLPSATPAPPPAQQ). The tract at residues 581-611 (SPLLPQQQPPPSAAPAPSPLLPQQQPPPSAA) is interaction with inner tegument protein. A compositionally biased stretch (low complexity) spans 1170–1182 (APISPASPSATPA). The segment covering 2619 to 2630 (SADNTPASSDRL) has biased composition (polar residues). Residues 2643-2654 (EGSTTAESEASG) show a composition bias toward low complexity. The span at 2738–2747 (QPAPQQPPSS) shows a compositional bias: pro residues. 2 stretches are compositionally biased toward polar residues: residues 2761–2772 (SPHSTPSTASGS) and 2811–2831 (SAAS…SSQD). The span at 2839 to 2854 (MQREKKQQGGREEAAE) shows a compositional bias: basic and acidic residues. Low complexity-rich tracts occupy residues 2872–2886 (APVV…ATPA) and 2901–2912 (APALGSGLAAPA).

It belongs to the herpesviridae large tegument protein family. Interacts with host CUL1 and CUL4A; these interactions inhibit the E3 ligase activity of cullins. Interacts with inner tegument protein. Interacts with capsid vertex specific component CVC2. Interacts with the major capsid protein/MCP. Interacts with host TRIM25 and YWHAZ.

Its subcellular location is the virion tegument. It localises to the host cytoplasm. It is found in the host nucleus. It catalyses the reaction Thiol-dependent hydrolysis of ester, thioester, amide, peptide and isopeptide bonds formed by the C-terminal Gly of ubiquitin (a 76-residue protein attached to proteins as an intracellular targeting signal).. Functionally, large tegument protein that plays multiple roles in the viral cycle. During viral entry, remains associated with the capsid while most of the tegument is detached and participates in the capsid transport toward the host nucleus. Plays a role in the routing of the capsid at the nuclear pore complex and subsequent uncoating. Within the host nucleus, acts as a deneddylase and promotes the degradation of nuclear CRLs (cullin-RING ubiquitin ligases) and thereby stabilizes nuclear CRL substrates, while cytoplasmic CRLs remain unaffected. These modifications prevent host cell cycle S-phase progression and create a favorable environment allowing efficient viral genome replication. Participates later in the secondary envelopment of capsids. Indeed, plays a linker role for the association of the outer viral tegument to the capsids together with the inner tegument protein. Counteracts host TLR-mediated NF-kappa-B activation through both MYD88 and TICAM1-dependent pathways by interfering with 'Lys-63'- and 'Lys-48'-linked ubiquitination of signaling intermediates such as TRAF6 and IKBKG. Inhibits type I interferon production by forming a tri-molecular complex with host TRIM25 and 14-3-3 thereby promoting TRIM25 autoubiquitination and sequestration of the ligase into inactive protein aggregates. In turn, host RIGI is recruited to the complex but ubiquitination is severely impaired leading to inhibition of the pathway. Also catalyzes the removal of 'Lys-48'- and 'Lys-63'-linked ubiquitin chains on host TBK1 and STING1 suppressing cGAS-STING signaling in addition to the RIGI-MAVS pathway. Inhibits selective autophagy by deubiquitinating host SQSTM1. In turn, decreased SQSTM1 ubiquitination fails to recruit LC3 to SQSTM1-positive aggregates. In the host nucleus, deubiquitinates topoisomerase II subunits TOP2A and TOP2B thereby stabilizing SUMOylated TOP2 which halts the DNA damage response to TOP2-induced double strand DNA breaks and promotes cell survival. This chain is Large tegument protein deneddylase, found in Homo sapiens (Human).